Reading from the N-terminus, the 224-residue chain is Transcriptional regulatory protein CiaR (224 aa).

The Response regulatory domain occupies 3–116; the sequence is KILLVEDDLG…ELKMRIQALL (114 aa). Aspartate 51 is subject to 4-aspartylphosphate. Positions 124–222 form a DNA-binding region, ompR/PhoB-type; the sequence is ENTLTYGNIV…LRSVGYLLKD (99 aa).

Phosphorylated by CiaH.

The protein resides in the cytoplasm. In terms of biological role, member of the two-component regulatory system CiaH/CiaR. Involved in early steps of competence regulation and in penicillin susceptibility. This Streptococcus pneumoniae (strain ATCC BAA-255 / R6) protein is Transcriptional regulatory protein CiaR (ciaR).